We begin with the raw amino-acid sequence, 345 residues long: Guanine nucleotide-binding protein G(i) subunit alpha-3 (345 aa).

Residues 23–345 (KEVKLLLLGA…KSNLMECGLY (323 aa)) enclose the G-alpha domain. The segment at 26–39 (KLLLLGAGESGKST) is G1 motif. Positions 33, 34, 35, 36, 37, 38, 39, 141, 142, 166, 167, 168, 169, 170, 171, 172, 192, 194, 260, 261, 263, 264, 316, 317, and 318 each coordinate GTP. Residue Ser38 coordinates Mg(2+). The interval 164–172 (DVLRTRVKT) is G2 motif. Thr172 serves as a coordination point for Mg(2+). A G3 motif region spans residues 187–196 (FKMFDVGGQR). The G4 motif stretch occupies residues 256 to 263 (ILFLNKKD). The segment at 315 to 320 (TCATDT) is G5 motif.

This sequence belongs to the G-alpha family. G(i/o/t/z) subfamily. In terms of assembly, heterotrimeric G proteins are composed of 3 units; alpha, beta and gamma. The alpha subunit contains the guanine nucleotide binding site. GTP binding causes dissociation of the heterotrimer, liberating the individual subunits so that they can interact with downstream effector proteins.

Its subcellular location is the cytoplasm. The protein localises to the cell membrane. The protein resides in the cytoskeleton. It is found in the microtubule organizing center. It localises to the centrosome. Its subcellular location is the membrane. In terms of biological role, heterotrimeric guanine nucleotide-binding proteins (G proteins) function as transducers downstream of G protein-coupled receptors (GPCRs) in numerous signaling cascades. The alpha chain contains the guanine nucleotide binding site and alternates between an active, GTP-bound state and an inactive, GDP-bound state. Signaling by an activated GPCR promotes GDP release and GTP binding. The alpha subunit has a low GTPase activity that converts bound GTP to GDP, thereby terminating the signal. Both GDP release and GTP hydrolysis are modulated by numerous regulatory proteins. Signaling is mediated via effector proteins, such as adenylate cyclase. Inhibits adenylate cyclase activity, leading to decreased intracellular cAMP levels. Stimulates the activity of receptor-regulated K(+) channels. The active GTP-bound form prevents the association of RGS14 with centrosomes and is required for the translocation of RGS14 from the cytoplasm to the plasma membrane. May play a role in cell division. The active GTP-bound form activates the calcium permeant TRPC5 ion channels. This chain is Guanine nucleotide-binding protein G(i) subunit alpha-3 (gnai3), found in Xenopus laevis (African clawed frog).